The following is a 263-amino-acid chain: Metaxin-2 (263 aa).

Position 2 is an N-acetylserine (Ser2).

It belongs to the metaxin family. In terms of assembly, interacts with MTX1/metaxin-1. Associates with the mitochondrial contact site and cristae organizing system (MICOS) complex, composed of at least MICOS10/MIC10, CHCHD3/MIC19, CHCHD6/MIC25, APOOL/MIC27, IMMT/MIC60, APOO/MIC23/MIC26 and QIL1/MIC13. This complex was also known under the names MINOS or MitOS complex. The MICOS complex associates with mitochondrial outer membrane proteins SAMM50, MTX1 and MTX2 (together described as components of the mitochondrial outer membrane sorting assembly machinery (SAM) complex) and DNAJC11, mitochondrial inner membrane protein TMEM11 and with HSPA9. The MICOS and SAM complexes together with DNAJC11 are part of a large protein complex spanning both membranes termed the mitochondrial intermembrane space bridging (MIB) complex.

It localises to the mitochondrion outer membrane. The protein localises to the mitochondrion. Functionally, involved in transport of proteins into the mitochondrion. The polypeptide is Metaxin-2 (Mtx2) (Mus musculus (Mouse)).